Reading from the N-terminus, the 202-residue chain is N-(5'-phosphoribosyl)anthranilate isomerase (202 aa).

This sequence belongs to the TrpF family.

The catalysed reaction is N-(5-phospho-beta-D-ribosyl)anthranilate = 1-(2-carboxyphenylamino)-1-deoxy-D-ribulose 5-phosphate. It functions in the pathway amino-acid biosynthesis; L-tryptophan biosynthesis; L-tryptophan from chorismate: step 3/5. This chain is N-(5'-phosphoribosyl)anthranilate isomerase, found in Geobacter metallireducens (strain ATCC 53774 / DSM 7210 / GS-15).